A 739-amino-acid chain; its full sequence is Catalase-peroxidase 2 (739 aa).

The first 26 residues, 1-26 (MKKSTIPTLSALTLAMSLAFGGSVIA), serve as a signal peptide directing secretion. Positions 105–227 (WHSAGVYRIF…MGATQMGLIY (123 aa)) form a cross-link, tryptophyl-tyrosyl-methioninium (Trp-Tyr) (with M-253). The active-site Proton acceptor is His-106. The segment at residues 227 to 253 (YVNPEGPNGVPDPLASAKEIRDTFGRM) is a cross-link (tryptophyl-tyrosyl-methioninium (Tyr-Met) (with W-105)). A heme b-binding site is contributed by His-268.

The protein belongs to the peroxidase family. Peroxidase/catalase subfamily. As to quaternary structure, homodimer or homotetramer. Heme b is required as a cofactor. Formation of the three residue Trp-Tyr-Met cross-link is important for the catalase, but not the peroxidase activity of the enzyme.

The catalysed reaction is H2O2 + AH2 = A + 2 H2O. It carries out the reaction 2 H2O2 = O2 + 2 H2O. Its function is as follows. Bifunctional enzyme with both catalase and broad-spectrum peroxidase activity. This is Catalase-peroxidase 2 from Shewanella sp. (strain MR-7).